The following is a 255-amino-acid chain: Type III pantothenate kinase (255 aa).

Position 6-13 (6-13 (DIGNSNIV)) interacts with ATP. Residues tyrosine 100 and 107-110 (GSDR) contribute to the substrate site. The active-site Proton acceptor is the aspartate 109. Aspartate 129 is a binding site for K(+). Threonine 132 contributes to the ATP binding site. Substrate is bound at residue threonine 184.

Belongs to the type III pantothenate kinase family. Homodimer. NH4(+) is required as a cofactor. It depends on K(+) as a cofactor.

Its subcellular location is the cytoplasm. The enzyme catalyses (R)-pantothenate + ATP = (R)-4'-phosphopantothenate + ADP + H(+). It functions in the pathway cofactor biosynthesis; coenzyme A biosynthesis; CoA from (R)-pantothenate: step 1/5. Functionally, catalyzes the phosphorylation of pantothenate (Pan), the first step in CoA biosynthesis. The sequence is that of Type III pantothenate kinase from Brevibacillus brevis (strain 47 / JCM 6285 / NBRC 100599).